The sequence spans 116 residues: uncharacterized protein (116 aa).

It belongs to the BolA/IbaG family.

Its subcellular location is the mitochondrion. This is an uncharacterized protein from Schizosaccharomyces pombe (strain 972 / ATCC 24843) (Fission yeast).